A 609-amino-acid polypeptide reads, in one-letter code: MCGIVGYIGGRTALPFLVDGLKRLEYRGYDSAGIATVGESGLELVRAKGKLHNLEEKLNGVAQSTGTVGIGHTRWATHGKPEEHNAHPHTDASGRLAVIQNGIIENYAELRLGLKERGCLFKSETDTEVIPHLIACRLAGHSLLEAVLAAVVELKGAFAIAVVSADFPDELIVVRQQAPLVIGFGEGENYFASDVPAIVSHTTRVLTLQDGECARLTRDEVQIHDFSGARLRRTPRSLNWNPSLVEKRGFRHFMLKEIHEQPGVIRDTLEDRIGDATGPIRLGLSSDLFADLERIYIIACGTSWHASLVGKYLIEELAGIPTEVNYASEFRYCPPPLNARTLVIGVSQSGETGDTNAALTAAKARGVRLLGITNRPESSLGALVGELIDTRAGMEIGVAATKTFTAQLVAFYLLALHLAHLRGTQSGERIREILVGLQQLPAQIEGILDTQERYITELAREFDATRDFIFIGRGLNYPIALEGALKLKEISYIHAEGYPAGEMKHGPIALLDSEVPVVAIAVPGKVYEKTLSNAQEAKARDARLIGVAPLDEPAAVETFDQILPVPVVDEILSPILTVVPLQLLAYHIAARRGLDVDQPRNLAKSVTVE.

Cysteine 2 (nucleophile; for GATase activity) is an active-site residue. The Glutamine amidotransferase type-2 domain occupies 2–219 (CGIVGYIGGR…DGECARLTRD (218 aa)). SIS domains are found at residues 285-424 (SSDL…LRGT) and 458-599 (LARE…VDQP). Lysine 604 (for Fru-6P isomerization activity) is an active-site residue.

In terms of assembly, homodimer.

The protein localises to the cytoplasm. The catalysed reaction is D-fructose 6-phosphate + L-glutamine = D-glucosamine 6-phosphate + L-glutamate. Catalyzes the first step in hexosamine metabolism, converting fructose-6P into glucosamine-6P using glutamine as a nitrogen source. This Gloeobacter violaceus (strain ATCC 29082 / PCC 7421) protein is Glutamine--fructose-6-phosphate aminotransferase [isomerizing].